The following is a 247-amino-acid chain: Pyridoxine 5'-phosphate synthase (247 aa).

N7 lines the 3-amino-2-oxopropyl phosphate pocket. Residue 9–10 (DH) coordinates 1-deoxy-D-xylulose 5-phosphate. R18 is a binding site for 3-amino-2-oxopropyl phosphate. The active-site Proton acceptor is the H43. 2 residues coordinate 1-deoxy-D-xylulose 5-phosphate: R45 and H50. Residue E70 is the Proton acceptor of the active site. T100 contacts 1-deoxy-D-xylulose 5-phosphate. Catalysis depends on H190, which acts as the Proton donor. Residues G191 and 212 to 213 (GH) contribute to the 3-amino-2-oxopropyl phosphate site.

Belongs to the PNP synthase family. Homooctamer; tetramer of dimers.

It localises to the cytoplasm. It carries out the reaction 3-amino-2-oxopropyl phosphate + 1-deoxy-D-xylulose 5-phosphate = pyridoxine 5'-phosphate + phosphate + 2 H2O + H(+). It functions in the pathway cofactor biosynthesis; pyridoxine 5'-phosphate biosynthesis; pyridoxine 5'-phosphate from D-erythrose 4-phosphate: step 5/5. Its function is as follows. Catalyzes the complicated ring closure reaction between the two acyclic compounds 1-deoxy-D-xylulose-5-phosphate (DXP) and 3-amino-2-oxopropyl phosphate (1-amino-acetone-3-phosphate or AAP) to form pyridoxine 5'-phosphate (PNP) and inorganic phosphate. In Synechococcus sp. (strain WH7803), this protein is Pyridoxine 5'-phosphate synthase.